A 143-amino-acid chain; its full sequence is Flagellar assembly factor FliW (143 aa).

This sequence belongs to the FliW family. Interacts with translational regulator CsrA and flagellin(s).

The protein resides in the cytoplasm. In terms of biological role, acts as an anti-CsrA protein, binds CsrA and prevents it from repressing translation of its target genes, one of which is flagellin. Binds to flagellin and participates in the assembly of the flagellum. This is Flagellar assembly factor FliW from Clostridium botulinum (strain Okra / Type B1).